We begin with the raw amino-acid sequence, 120 residues long: UPF0342 protein LAF_1331 (120 aa).

Belongs to the UPF0342 family.

The sequence is that of UPF0342 protein LAF_1331 from Limosilactobacillus fermentum (strain NBRC 3956 / LMG 18251) (Lactobacillus fermentum).